The primary structure comprises 391 residues: MAMAAAAVIVPLGILFFISGLVVNLLQAVCYVLIRPLSKNTYRKINRVVAETLWLELVWIVDWWAGVKIQVFADDETFNRMGKEHALVVCNHRSDIDWLVGWILAQRSGCLGSALAVMKKSSKFLPVIGWSMWFSEYLFLERNWAKDESTLKSGLQRLNDFPRPFWLALFVEGTRFTEAKLKAAQEYAATSQLPVPRNVLIPRTKGFVSAVSNMRSFVPAIYDMTVAIPKTSPPPTMLRLFKGQPSVVHVHIKCHSMKDLPESEDEIAQWCRDQFVAKDALLDKHIAADTFPGQKEQNIDRPIKSLAVVVSWACLLTLGAMKFLHWSNLFSSLKGIALSALGLGIITLCMQILIRSSQSERSTPAKVAPAKPKDKHQSGSSSQTEVEEKQK.

A helical transmembrane segment spans residues 3–23 (MAAAAVIVPLGILFFISGLVV). The short motif at 92–97 (HRSDID) is the HXXXXD motif element. 2 consecutive transmembrane segments (helical) span residues 306–326 (LAVV…FLHW) and 334–354 (KGIA…QILI). Positions 358-391 (QSERSTPAKVAPAKPKDKHQSGSSSQTEVEEKQK) are disordered.

Belongs to the 1-acyl-sn-glycerol-3-phosphate acyltransferase family.

Its subcellular location is the endoplasmic reticulum membrane. It catalyses the reaction a 1-acyl-sn-glycero-3-phosphate + an acyl-CoA = a 1,2-diacyl-sn-glycero-3-phosphate + CoA. Its pathway is phospholipid metabolism; CDP-diacylglycerol biosynthesis; CDP-diacylglycerol from sn-glycerol 3-phosphate: step 2/3. In terms of biological role, converts lysophosphatidic acid (LPA) into phosphatidic acid by incorporating acyl moiety at the 2 position. The polypeptide is 1-acyl-sn-glycerol-3-phosphate acyltransferase 2 (LPAT2) (Brassica oleracea (Wild cabbage)).